We begin with the raw amino-acid sequence, 558 residues long: MEIILFLTMMVMITYVFSGYLYRVALVQSSRVDLIFTRFENMCFKIIGTDLEHMSAKTYVKHFLAFNGFMGFITFVLLIVQQWLFLNPNHILNQSIDLAFNTAISFLTNSNLQHYNGESDVTYLTQMIVMTYLMFTSSASGYAVCIAMLRRLTGLTNIIGNFYQDIVRFIVRVLLPLSCLISILLMTQGVPQTLHANLMIRTLSGHIQHIAFGPIASLESIKHLGTNGGGFLAGNSATPFENPNIWSNFIEMGSMMLLPMSMLFLFGRMLSRHGKRVHRHALILFVAMFFIFIAILTLTMWSEYRGNPILANLGIYGPNMEGKEVRFGAGLSALFTVITTAFTTGSVNNMHDSLTPIGGLGPMVLMMLNVVFGGEGVGLMNLLIFVLLTVFICSLMVGKTPEYLNMPIGAREMKCIVLVFLIHPILILVFSALAFMIPGASESITNPSFHGISQVMYEMTSAAANNGSGFEGLKDDTTFWNISTGIIMLLSRYIPIILQLMIASSLVNKKSYHQDKYTIAIDKPYFGVSLIVFIVLLSGLTFIPVLLLGPIGEFLTLK.

A run of 12 helical transmembrane segments spans residues Met-1–Leu-21, Phe-66–Leu-86, Met-127–Ala-147, Ile-166–Met-186, Ile-245–Leu-265, Ala-281–Trp-301, Phe-327–Val-347, Leu-354–Gly-374, Val-377–Val-397, Ile-416–Met-436, Ile-482–Ile-502, and Ile-531–Ile-551.

The protein belongs to the KdpA family. In terms of assembly, the system is composed of three essential subunits: KdpA, KdpB and KdpC.

It localises to the cell membrane. Its function is as follows. Part of the high-affinity ATP-driven potassium transport (or Kdp) system, which catalyzes the hydrolysis of ATP coupled with the electrogenic transport of potassium into the cytoplasm. This subunit binds the extracellular potassium ions and delivers the ions to the membrane domain of KdpB through an intramembrane tunnel. The polypeptide is Potassium-transporting ATPase potassium-binding subunit 1 (Staphylococcus aureus (strain Mu50 / ATCC 700699)).